A 305-amino-acid polypeptide reads, in one-letter code: Aspartate carbamoyltransferase catalytic subunit (305 aa).

Carbamoyl phosphate-binding residues include Arg-54 and Thr-55. An L-aspartate-binding site is contributed by Lys-82. Carbamoyl phosphate contacts are provided by Arg-104, His-132, and Gln-135. Residues Arg-165 and Arg-218 each coordinate L-aspartate. Carbamoyl phosphate contacts are provided by Gly-259 and Pro-260.

It belongs to the aspartate/ornithine carbamoyltransferase superfamily. ATCase family. In terms of assembly, heterododecamer (2C3:3R2) of six catalytic PyrB chains organized as two trimers (C3), and six regulatory PyrI chains organized as three dimers (R2).

The enzyme catalyses carbamoyl phosphate + L-aspartate = N-carbamoyl-L-aspartate + phosphate + H(+). It functions in the pathway pyrimidine metabolism; UMP biosynthesis via de novo pathway; (S)-dihydroorotate from bicarbonate: step 2/3. Catalyzes the condensation of carbamoyl phosphate and aspartate to form carbamoyl aspartate and inorganic phosphate, the committed step in the de novo pyrimidine nucleotide biosynthesis pathway. This chain is Aspartate carbamoyltransferase catalytic subunit, found in Caldicellulosiruptor bescii (strain ATCC BAA-1888 / DSM 6725 / KCTC 15123 / Z-1320) (Anaerocellum thermophilum).